The sequence spans 794 residues: Signal transducer and activator of transcription 5A (794 aa).

Position 90 is a phosphotyrosine (Tyr90). Ser129 is modified (phosphoserine). An SH2 domain is found at 589-686; the sequence is WNDGAILGFV…EVFSKYYTPV (98 aa). The residue at position 682 (Tyr682) is a Phosphotyrosine. Tyr694 is subject to Phosphotyrosine; by JAK2. Residues 765 to 794 are disordered; the sequence is EELLRRPNGQSGPLSPPPAGLFTPARGSLS.

It belongs to the transcription factor STAT family. In terms of assembly, forms a homodimer or a heterodimer with a related family member. Binds NR3C1. Interacts with NCOA1 and SOCS7. Interacts with ERBB4. Interacts with EBF4. Interacts with CD69. Post-translationally, ISGylated. In terms of processing, tyrosine phosphorylated in response to KITLG/SCF, IL2, IL3, IL7, IL15, CSF2/GMCSF, GH1, PRL, EPO and THPO. Activated KIT promotes phosphorylation on tyrosine residues and subsequent translocation to the nucleus. Tyrosine phosphorylated in response to constitutively activated FGFR1, FGFR2, FGFR3 and FGFR4. Tyrosine phosphorylation is required for DNA-binding activity and dimerization. Serine phosphorylation is also required for maximal transcriptional activity. Tyrosine phosphorylated in response to signaling via activated FLT3; wild-type FLT3 results in much weaker phosphorylation than constitutively activated mutant FLT3. Alternatively, can be phosphorylated by JAK2 at Tyr-694. As to expression, found in mammary gland and, in lesser extent, in ovary, thymus, spleen, kidney, lung, muscle and adrenal gland.

It localises to the cytoplasm. The protein resides in the nucleus. In terms of biological role, carries out a dual function: signal transduction and activation of transcription. Mediates cellular responses to the cytokine KITLG/SCF and other growth factors. May mediate cellular responses to activated FGFR1, FGFR2, FGFR3 and FGFR4. Binds to the GAS element and activates PRL-induced transcription. Regulates the expression of milk proteins during lactation. In Ovis aries (Sheep), this protein is Signal transducer and activator of transcription 5A (STAT5A).